Here is a 336-residue protein sequence, read N- to C-terminus: Uroporphyrinogen decarboxylase (336 aa).

Residues 24–28 (RQVGR), aspartate 73, tyrosine 142, serine 197, and histidine 312 each bind substrate.

It belongs to the uroporphyrinogen decarboxylase family. Homodimer.

It localises to the cytoplasm. The catalysed reaction is uroporphyrinogen III + 4 H(+) = coproporphyrinogen III + 4 CO2. The protein operates within porphyrin-containing compound metabolism; protoporphyrin-IX biosynthesis; coproporphyrinogen-III from 5-aminolevulinate: step 4/4. Its function is as follows. Catalyzes the decarboxylation of four acetate groups of uroporphyrinogen-III to yield coproporphyrinogen-III. The sequence is that of Uroporphyrinogen decarboxylase from Chlamydia trachomatis serovar L2 (strain ATCC VR-902B / DSM 19102 / 434/Bu).